The sequence spans 122 residues: Large ribosomal subunit protein uL14 (122 aa).

This sequence belongs to the universal ribosomal protein uL14 family. As to quaternary structure, part of the 50S ribosomal subunit. Forms a cluster with proteins L3 and L19. In the 70S ribosome, L14 and L19 interact and together make contacts with the 16S rRNA in bridges B5 and B8.

Its function is as follows. Binds to 23S rRNA. Forms part of two intersubunit bridges in the 70S ribosome. This Beijerinckia indica subsp. indica (strain ATCC 9039 / DSM 1715 / NCIMB 8712) protein is Large ribosomal subunit protein uL14.